Here is a 702-residue protein sequence, read N- to C-terminus: Ribosomal RNA large subunit methyltransferase K/L (702 aa).

In terms of domain architecture, THUMP spans 43–154 (LVYQSLMWSR…KETASIALDL (112 aa)).

Belongs to the methyltransferase superfamily. RlmKL family.

The protein localises to the cytoplasm. The catalysed reaction is guanosine(2445) in 23S rRNA + S-adenosyl-L-methionine = N(2)-methylguanosine(2445) in 23S rRNA + S-adenosyl-L-homocysteine + H(+). It catalyses the reaction guanosine(2069) in 23S rRNA + S-adenosyl-L-methionine = N(2)-methylguanosine(2069) in 23S rRNA + S-adenosyl-L-homocysteine + H(+). Specifically methylates the guanine in position 2445 (m2G2445) and the guanine in position 2069 (m7G2069) of 23S rRNA. In Shigella boydii serotype 4 (strain Sb227), this protein is Ribosomal RNA large subunit methyltransferase K/L.